Here is a 407-residue protein sequence, read N- to C-terminus: Endo-1,4-beta-xylanase D (407 aa).

Residues Met1–Ala19 form the signal peptide. The region spanning Gln20–Gly333 is the GH10 domain. N-linked (GlcNAc...) asparagine glycosylation occurs at Asn118. The Proton donor role is filled by Glu148. The active-site Nucleophile is the Glu255. Cys283 and Cys289 are oxidised to a cystine. Residues Gly337 to Ala364 form a disordered region. Residues Ser371 to Leu407 form the CBM1 domain.

It belongs to the glycosyl hydrolase 10 (cellulase F) family.

It localises to the secreted. The catalysed reaction is Endohydrolysis of (1-&gt;4)-beta-D-xylosidic linkages in xylans.. It participates in glycan degradation; xylan degradation. With respect to regulation, inhibited by wheat xylanase inhibiting protein I (XIP-I). Functionally, endo-1,4-beta-xylanase involved in the hydrolysis of xylan, a major structural heterogeneous polysaccharide found in plant biomass representing the second most abundant polysaccharide in the biosphere, after cellulose. Shows an endo-mode of action on xylan forming mainly xylobiose and short-chain xylooligosaccharides (XOS). The polypeptide is Endo-1,4-beta-xylanase D (xynD) (Talaromyces funiculosus (Fruitlet core rot fungus)).